Here is a 725-residue protein sequence, read N- to C-terminus: Catalase-peroxidase (725 aa).

The tryptophyl-tyrosyl-methioninium (Trp-Tyr) (with M-239) cross-link spans 90-213; the sequence is WHSAGTYRTG…LAAVQMGLIY (124 aa). H91 functions as the Proton acceptor in the catalytic mechanism. The segment at residues 213 to 239 is a cross-link (tryptophyl-tyrosyl-methioninium (Tyr-Met) (with W-90)); the sequence is YVNPEGPNGNPDPVAAAKDIRETFARM. Position 254 (H254) interacts with heme b.

This sequence belongs to the peroxidase family. Peroxidase/catalase subfamily. Homodimer or homotetramer. It depends on heme b as a cofactor. Formation of the three residue Trp-Tyr-Met cross-link is important for the catalase, but not the peroxidase activity of the enzyme.

It catalyses the reaction H2O2 + AH2 = A + 2 H2O. The enzyme catalyses 2 H2O2 = O2 + 2 H2O. In terms of biological role, bifunctional enzyme with both catalase and broad-spectrum peroxidase activity. This Hahella chejuensis (strain KCTC 2396) protein is Catalase-peroxidase.